The sequence spans 333 residues: Ribosomal protein L11 methyltransferase (333 aa).

Threonine 181, glycine 202, aspartate 224, and asparagine 268 together coordinate S-adenosyl-L-methionine.

It belongs to the methyltransferase superfamily. PrmA family.

The protein localises to the cytoplasm. It carries out the reaction L-lysyl-[protein] + 3 S-adenosyl-L-methionine = N(6),N(6),N(6)-trimethyl-L-lysyl-[protein] + 3 S-adenosyl-L-homocysteine + 3 H(+). Functionally, methylates ribosomal protein L11. This chain is Ribosomal protein L11 methyltransferase, found in Helicobacter pylori (strain ATCC 700392 / 26695) (Campylobacter pylori).